Reading from the N-terminus, the 246-residue chain is 14-3-3 protein beta/alpha (246 aa).

M1 bears the N-acetylmethionine mark. The residue at position 2 (T2) is an N-acetylthreonine; in 14-3-3 protein beta/alpha, N-terminally processed. T2 carries the post-translational modification Phosphothreonine. Position 5 is an N6-acetyllysine (K5). K51 carries the post-translational modification N6-acetyllysine; alternate. A Glycyl lysine isopeptide (Lys-Gly) (interchain with G-Cter in SUMO2); alternate cross-link involves residue K51. S60 is modified (phosphoserine). Position 70 is an N6-acetyllysine (K70). Residues Y84 and Y106 each carry the 3'-nitrotyrosine modification. Residue K117 is modified to N6-acetyllysine. Phosphoserine is present on residues S186 and S232.

The protein belongs to the 14-3-3 family. As to quaternary structure, homodimer. Interacts with SAMSN1 and PRKCE. Interacts with AKAP13. Interacts with SSH1 and TORC2/CRTC2. Interacts with ABL1; the interaction results in cytoplasmic location of ABL1 and inhibition of cABL-mediated apoptosis. Interacts with ROR2 (dimer); the interaction results in phosphorylation of YWHAB on tyrosine residues. Interacts with GAB2. Interacts with YAP1 (phosphorylated form). Interacts with the phosphorylated (by AKT1) form of SRPK2. Interacts with PKA-phosphorylated AANAT. Interacts with MYO1C. Interacts with SIRT2. Interacts with the 'Thr-369' phosphorylated form of DAPK2. Interacts with PI4KB, TBC1D22A and TBC1D22B. Interacts with the 'Ser-1134' and 'Ser-1161' phosphorylated form of SOS1. Interacts (via phosphorylated form) with YWHAB; this interaction occurs in a protein kinase AKT1-dependent manner. Interacts with SLITRK1. Interacts with SYNPO2 (phosphorylated form); YWHAB competes with ACTN2 for interaction with SYNPO2. Interacts with RIPOR2 (via phosphorylated form); this interaction occurs in a chemokine-dependent manner and does not compete for binding of RIPOR2 with RHOA nor blocks inhibition of RIPOR2-mediated RHOA activity. Interacts with MARK2 and MARK3. Interacts with TESK1; the interaction is dependent on the phosphorylation of TESK1 'Ser-439' and inhibits TESK1 kinase activity. Interacts with MEFV. Interacts with HDAC4. Interacts with ADAM22 (via C-terminus). In terms of processing, the alpha, brain-specific form differs from the beta form in being phosphorylated. Phosphorylated on Ser-60 by protein kinase C delta type catalytic subunit in a sphingosine-dependent fashion.

The protein resides in the cytoplasm. The protein localises to the melanosome. In terms of biological role, adapter protein implicated in the regulation of a large spectrum of both general and specialized signaling pathways. Binds to a large number of partners, usually by recognition of a phosphoserine or phosphothreonine motif. Binding generally results in the modulation of the activity of the binding partner. Negative regulator of osteogenesis. Blocks the nuclear translocation of the phosphorylated form (by AKT1) of SRPK2 and antagonizes its stimulatory effect on cyclin D1 expression resulting in blockage of neuronal apoptosis elicited by SRPK2. Negative regulator of signaling cascades that mediate activation of MAP kinases via AKAP13. In Bos taurus (Bovine), this protein is 14-3-3 protein beta/alpha (YWHAB).